The following is a 327-amino-acid chain: tRNA(Ile)-lysidine synthase (327 aa).

32–37 is a binding site for ATP; it reads SGGQDS.

This sequence belongs to the tRNA(Ile)-lysidine synthase family.

The protein resides in the cytoplasm. The enzyme catalyses cytidine(34) in tRNA(Ile2) + L-lysine + ATP = lysidine(34) in tRNA(Ile2) + AMP + diphosphate + H(+). In terms of biological role, ligates lysine onto the cytidine present at position 34 of the AUA codon-specific tRNA(Ile) that contains the anticodon CAU, in an ATP-dependent manner. Cytidine is converted to lysidine, thus changing the amino acid specificity of the tRNA from methionine to isoleucine. The protein is tRNA(Ile)-lysidine synthase of Synechococcus sp. (strain JA-2-3B'a(2-13)) (Cyanobacteria bacterium Yellowstone B-Prime).